Here is a 240-residue protein sequence, read N- to C-terminus: Ubiquinone biosynthesis O-methyltransferase (240 aa).

4 residues coordinate S-adenosyl-L-methionine: R44, G64, D85, and M129.

This sequence belongs to the methyltransferase superfamily. UbiG/COQ3 family.

It carries out the reaction a 3-demethylubiquinol + S-adenosyl-L-methionine = a ubiquinol + S-adenosyl-L-homocysteine + H(+). It catalyses the reaction a 3-(all-trans-polyprenyl)benzene-1,2-diol + S-adenosyl-L-methionine = a 2-methoxy-6-(all-trans-polyprenyl)phenol + S-adenosyl-L-homocysteine + H(+). It functions in the pathway cofactor biosynthesis; ubiquinone biosynthesis. Its function is as follows. O-methyltransferase that catalyzes the 2 O-methylation steps in the ubiquinone biosynthetic pathway. The protein is Ubiquinone biosynthesis O-methyltransferase of Escherichia coli O8 (strain IAI1).